A 499-amino-acid polypeptide reads, in one-letter code: Terpentedienyl-diphosphate synthase (499 aa).

Residues aspartate 284 and aspartate 286 each coordinate Mg(2+). Residues 284–287 carry the DXDD motif motif; that stretch reads DGDD.

The protein belongs to the terpene synthase family. In terms of assembly, monomer. It depends on Mg(2+) as a cofactor.

It catalyses the reaction (2E,6E,10E)-geranylgeranyl diphosphate = terpentedienyl diphosphate. It participates in antibiotic biosynthesis. Its function is as follows. Involved in the production of the isoprenoid antibiotic terpentecin. Converts geranylgeranyl diphosphate (GGDP) into terpentedienol diphosphate (TDP) by a protonation-initiated cyclization. This chain is Terpentedienyl-diphosphate synthase (cyc1), found in Kitasatospora griseola (Streptomyces griseolosporeus).